The sequence spans 359 residues: Non-classical arabinogalactan protein 31 (359 aa).

A signal peptide spans 1 to 24 (MGFIGKSVLVSLVALWCFTSSVFT). The segment at 31-215 (TQTPSLAPAP…PPVSPPTKPP (185 aa)) is disordered. The segment covering 44–66 (HHGHHHPHPPHHHHPHPHPHPHP) has biased composition (basic residues). Over residues 67 to 215 (PAKSPVKPPV…PPVSPPTKPP (149 aa)) the composition is skewed to pro residues. Pro71, Pro75, Pro79, Pro82, Pro83, Pro87, Pro91, Pro95, Pro99, Pro103, Pro107, Pro111, Pro114, Pro115, Pro119, Pro123, Pro127, Pro131, Pro135, Pro139, Pro143, Pro147, Pro151, Pro155, Pro159, Pro163, Pro167, Pro171, Pro175, Pro179, Pro183, Pro186, Pro187, Pro191, Pro195, Pro199, Pro203, Pro207, Pro210, Pro211, Pro215, and Pro219 each carry 4-hydroxyproline. O-linked (Ara...) hydroxyproline glycosylation is found at Pro71, Pro75, Pro79, Pro82, Pro83, Pro87, Pro91, Pro95, Pro99, Pro103, Pro107, Pro111, Pro114, Pro115, Pro119, Pro123, Pro127, Pro131, Pro135, Pro139, Pro143, Pro147, Pro151, Pro155, Pro159, Pro163, Pro167, Pro171, Pro175, Pro179, Pro183, Pro186, Pro187, Pro191, Pro195, Pro199, Pro203, Pro207, Pro210, Pro211, Pro215, and Pro219. Residues 90–109 (PPVYPPTKAPVKPPTKPPVK) form repeat 1. 3 repeat units span residues 122 to 141 (PPVY…PPVK), 142 to 161 (PPVY…PPVK), and 162 to 181 (PPVY…PPVK). Residues Asn226 and Asn269 are each glycosylated (N-linked (GlcNAc...) asparagine).

Belongs to the non-classical AGP family. Post-translationally, hydroxylated on numerous prolines in the proline-rich region. O-glycosylated on numerous hydroxyprolines in the proline-rich region; noncontiguous hydroxylproline residues are glycosylated with arabinogalactan. Expressed in vascular bundles of roots, leaves, sepals and stamen filaments, and pistils but not stigma.

It localises to the secreted. The protein resides in the cell wall. Functionally, proteoglycan that may contribute to the strengthening of cell walls. The protein is Non-classical arabinogalactan protein 31 of Arabidopsis thaliana (Mouse-ear cress).